The sequence spans 43 residues: Parvalbumin beta (43 aa).

EF-hand domains follow at residues 1 to 20 and 22 to 43; these read KVFE…LKLF and LSSA…ALVK. Residues D7, D9, S11, F12, E14, E16, and E37 each contribute to the Ca(2+) site.

Detected in muscle and cutaneous mucus. In the skin, detected in cells in the basal region of the glandular epithelium of the dermal mucus glands (at protein level).

The protein localises to the cytoplasm. The protein resides in the secreted. In muscle, parvalbumin is thought to be involved in relaxation after contraction. It binds two calcium ions. The chain is Parvalbumin beta from Rana temporaria (European common frog).